The sequence spans 143 residues: Peptide methionine sulfoxide reductase MsrB (143 aa).

One can recognise a MsrB domain in the interval 16–139; it reads DAELRRRLTP…NSAALNFESR (124 aa). Residues cysteine 55, cysteine 58, cysteine 104, and cysteine 107 each coordinate Zn(2+). Cysteine 128 (nucleophile) is an active-site residue.

It belongs to the MsrB Met sulfoxide reductase family. It depends on Zn(2+) as a cofactor.

The enzyme catalyses L-methionyl-[protein] + [thioredoxin]-disulfide + H2O = L-methionyl-(R)-S-oxide-[protein] + [thioredoxin]-dithiol. This Burkholderia multivorans (strain ATCC 17616 / 249) protein is Peptide methionine sulfoxide reductase MsrB.